A 217-amino-acid chain; its full sequence is DNA repair protein homolog YobH (217 aa).

Positions 1–68 constitute a UmuC domain; that stretch reads MAKAIQSSMW…RPLSKMWGIG (68 aa).

It belongs to the DNA polymerase type-Y family.

The sequence is that of DNA repair protein homolog YobH (yobH) from Bacillus subtilis (strain 168).